Reading from the N-terminus, the 302-residue chain is Mitochondrial glycine transporter (302 aa).

Solcar repeat units lie at residues H22–H112, P119–L203, and F213–K297. 6 consecutive transmembrane segments (helical) span residues F28–Q53, G87–F113, V125–E150, G178–K201, L217–M243, and G272–V290.

This sequence belongs to the mitochondrial carrier (TC 2.A.29) family. SLC25A38 subfamily.

Its subcellular location is the mitochondrion inner membrane. The enzyme catalyses glycine(in) = glycine(out). Its function is as follows. Mitochondrial glycine transporter that imports glycine into the mitochondrial matrix. Plays an important role in providing glycine for the first enzymatic step in heme biosynthesis, the condensation of glycine with succinyl-CoA to produce 5-aminolevulinate (ALA) in the mitochondrial matrix. Required during erythropoiesis. Functionally, may play a role as pro-apoptotic protein that induces caspase-dependent apoptosis. In Xenopus laevis (African clawed frog), this protein is Mitochondrial glycine transporter.